Reading from the N-terminus, the 573-residue chain is Kinesin light chain 1 (573 aa).

Positions 27 to 156 form a coiled coil; sequence KTKQVIQGLE…HLEFMNQLKK (130 aa). The segment covering 155–176 has biased composition (basic and acidic residues); the sequence is KKYDDDISPSEDKDTDSTKEPL. Residues 155–203 form a disordered region; sequence KKYDDDISPSEDKDTDSTKEPLDDLFPNDEDDPGQGIQQQHSSAAAAAQ. Serine 162 bears the Phosphoserine mark. Over residues 188 to 203 the composition is skewed to low complexity; that stretch reads GQGIQQQHSSAAAAAQ. 5 TPR repeats span residues 213–246, 255–288, 297–330, 339–372, and 381–414; these read LRTLHNLVIQYASQGRYEVAVPLCKQALEDLEKT, ATMLNILALVYRDQNKYKDAANLLNDALAIREKT, AATLNNLAVLYGKRGKYKEAEPLCKRALEIREKV, AKQLNNLALLCQNQGKYEEVEYYYQRALEIYQTK, and AKTKNNLASCYLKQGKFKQAETLYKEILTRAHER. At tyrosine 449 the chain carries Phosphotyrosine. Serine 460 carries the phosphoserine modification. A TPR 6 repeat occupies 464-497; that stretch reads TTTLKNLGALYRRQGKFEAAETLEEAAMRSRKQG. A phosphoserine; by AMPK mark is found at serine 521 and serine 524. Glutamate 547 is modified (phosphoserine). A disordered region spans residues 553–573; that stretch reads SGRASFCGKRQQQQWPGRRHR.

Belongs to the kinesin light chain family. In terms of assembly, oligomeric complex composed of two heavy chains and two light chains. Interacts with SPAG9. Interacts with ATCAY; may link mitochondria to KLC1 and regulate mitochondria localization into neuron projections. Interacts (via TPR repeats) with TOR1A; the interaction associates TOR1A with the kinesin oligomeric complex. Interacts with BORCS5. Interacts with MAPK8IP3/JIP3 and NTRK2/TRKB; interaction with NTRK2/TRKB is mediated by MAPK8IP3/JIP3. Interacts with CLSTN1; phosphorylation at Ser-460 inhibits interaction with CLSTN1. (Microbial infection) Interacts with adenovirus hexon-interlacing protein; this interaction leads to capsid disruption at the nuclear pore complex during virus entry into host cell. Phosphorylation at Ser-460 by ERK inhibits interaction with CLSTN1 and localization to cytoplasmic vesicles. As to expression, found in a variety of tissues. Mostly abundant in brain and spine.

It is found in the cell projection. It localises to the growth cone. Its subcellular location is the cytoplasmic vesicle. The protein resides in the cytoplasm. The protein localises to the cytoskeleton. Functionally, kinesin is a microtubule-associated force-producing protein that may play a role in organelle transport. The light chain may function in coupling of cargo to the heavy chain or in the modulation of its ATPase activity. This Homo sapiens (Human) protein is Kinesin light chain 1 (KLC1).